The chain runs to 301 residues: Cell division control protein 2 homolog 1 (301 aa).

Positions 5–297 (YQRLEKIGEG…AAQALEHPYF (293 aa)) constitute a Protein kinase domain. ATP-binding positions include 11 to 19 (IGEGSYGVV) and Lys-34. Residue Ser-15 is modified to Phosphoserine. Position 16 is a phosphotyrosine (Tyr-16). The active-site Proton acceptor is the Asp-127. Thr-160 bears the Phosphothreonine; by CAK mark.

This sequence belongs to the protein kinase superfamily. CMGC Ser/Thr protein kinase family. CDC2/CDKX subfamily. In terms of assembly, forms a stable but non-covalent complex with a regulatory subunit and with a cyclin.

It carries out the reaction L-seryl-[protein] + ATP = O-phospho-L-seryl-[protein] + ADP + H(+). The catalysed reaction is L-threonyl-[protein] + ATP = O-phospho-L-threonyl-[protein] + ADP + H(+). With respect to regulation, phosphorylation at Ser-15 or Tyr-16 inactivates the enzyme, while phosphorylation at Thr-160 activates it. Its function is as follows. Probably involved in the control of the cell cycle. This is Cell division control protein 2 homolog 1 (CRK1) from Trypanosoma congolense.